The chain runs to 437 residues: Probable indole-3-pyruvate monooxygenase YUCCA3 (437 aa).

41–46 (GAGPSG) contributes to the FAD binding site. NADP(+) is bound at residue 212 to 217 (GCGNSG).

The protein belongs to the FMO family. FAD serves as cofactor.

The catalysed reaction is indole-3-pyruvate + NADPH + O2 + H(+) = (indol-3-yl)acetate + CO2 + NADP(+) + H2O. It functions in the pathway plant hormone metabolism; auxin biosynthesis. Involved in auxin biosynthesis. Belongs to the set of redundant YUCCA genes probably responsible for auxin biosynthesis in roots. In Arabidopsis thaliana (Mouse-ear cress), this protein is Probable indole-3-pyruvate monooxygenase YUCCA3 (YUC3).